We begin with the raw amino-acid sequence, 500 residues long: 4-aminobutyrate aminotransferase, mitochondrial (500 aa).

The transit peptide at 1 to 28 directs the protein to the mitochondrion; it reads MASMLVAQRLACSFQHSYRLLVPGSRHI. Cys163 is a [2Fe-2S] cluster binding site. 164–165 lines the pyridoxal 5'-phosphate pocket; that stretch reads GS. Position 166 (Cys166) interacts with [2Fe-2S] cluster. Arg220 provides a ligand contact to substrate. Lys231 carries the post-translational modification N6-succinyllysine. Lys252 bears the N6-acetyllysine; alternate mark. Lys252 carries the N6-succinyllysine; alternate modification. Lys279 and Lys318 each carry N6-acetyllysine. Lys357 is subject to N6-(pyridoxal phosphate)lysine. Pyridoxal 5'-phosphate is bound at residue Thr381. Lys413 bears the N6-acetyllysine; alternate mark. Lys413 is subject to N6-succinyllysine; alternate. Residues Lys452 and Lys470 each carry the N6-acetyllysine modification.

Belongs to the class-III pyridoxal-phosphate-dependent aminotransferase family. In terms of assembly, homodimer; disulfide-linked. Pyridoxal 5'-phosphate serves as cofactor. Requires [2Fe-2S] cluster as cofactor.

Its subcellular location is the mitochondrion matrix. It catalyses the reaction 4-aminobutanoate + 2-oxoglutarate = succinate semialdehyde + L-glutamate. It carries out the reaction (S)-3-amino-2-methylpropanoate + 2-oxoglutarate = 2-methyl-3-oxopropanoate + L-glutamate. Catalyzes the conversion of gamma-aminobutyrate and L-beta-aminoisobutyrate to succinate semialdehyde and methylmalonate semialdehyde, respectively. Can also convert delta-aminovalerate and beta-alanine. In Bos taurus (Bovine), this protein is 4-aminobutyrate aminotransferase, mitochondrial (ABAT).